The sequence spans 1208 residues: Calmodulin-binding transcription activator 2 (1208 aa).

A DNA-binding region (CG-1) is located at residues 30 to 160 (RCPLLPPERL…YLNVPALEDC (131 aa)). The Nuclear localization signal motif lies at 78 to 86 (NRKKVKYRK). Disordered regions lie at residues 269–328 (ISHS…SRGG), 366–418 (VGSE…PCPA), and 437–507 (QLGA…ELEP). Residues 275–288 (PEPPPLIAPLPPEL) show a composition bias toward pro residues. Composition is skewed to low complexity over residues 294 to 305 (SPSSSSSSSSSS) and 319 to 328 (TSRGGSSRGG). Composition is skewed to pro residues over residues 371 to 380 (SAPPAPPSPA) and 464 to 476 (TVPP…PSSP). The IPT/TIG domain occupies 544–622 (DFSPEWSYPE…LSASVLFEYR (79 aa)). ANK repeat units follow at residues 717–750 (RGMS…SLDL), 762–792 (FSCT…ALSI), and 796–826 (LGRL…ELSV). 2 disordered regions span residues 826–881 (VEHP…ASDI) and 908–936 (NSKE…DSPP). Low complexity predominate over residues 829–853 (PLALSPPSSSPDTGLSSASSPSELS). IQ domains follow at residues 1054 to 1083 (LYEA…AAAV) and 1107 to 1136 (MTQA…AAVL). The interval 1144–1166 (YRRRPGPPHRPSGPLPARNKGTF) is disordered.

This sequence belongs to the CAMTA family. May interact with calmodulin.

The protein resides in the nucleus. In terms of biological role, transcription activator. May act as tumor suppressor. In Mus musculus (Mouse), this protein is Calmodulin-binding transcription activator 2 (Camta2).